The following is a 361-amino-acid chain: Cobalt-precorrin-5B C(1)-methyltransferase (361 aa).

This sequence belongs to the CbiD family.

The enzyme catalyses Co-precorrin-5B + S-adenosyl-L-methionine = Co-precorrin-6A + S-adenosyl-L-homocysteine. Its pathway is cofactor biosynthesis; adenosylcobalamin biosynthesis; cob(II)yrinate a,c-diamide from sirohydrochlorin (anaerobic route): step 6/10. Functionally, catalyzes the methylation of C-1 in cobalt-precorrin-5B to form cobalt-precorrin-6A. The protein is Cobalt-precorrin-5B C(1)-methyltransferase of Methanobrevibacter smithii (strain ATCC 35061 / DSM 861 / OCM 144 / PS).